Here is a 310-residue protein sequence, read N- to C-terminus: Homoserine kinase (310 aa).

91–101 provides a ligand contact to ATP; that stretch reads PIGSGLGSSAC.

It belongs to the GHMP kinase family. Homoserine kinase subfamily.

The protein localises to the cytoplasm. The enzyme catalyses L-homoserine + ATP = O-phospho-L-homoserine + ADP + H(+). It functions in the pathway amino-acid biosynthesis; L-threonine biosynthesis; L-threonine from L-aspartate: step 4/5. Its function is as follows. Catalyzes the ATP-dependent phosphorylation of L-homoserine to L-homoserine phosphate. This is Homoserine kinase from Shigella sonnei (strain Ss046).